We begin with the raw amino-acid sequence, 397 residues long: Tryptophan synthase beta chain (397 aa).

N6-(pyridoxal phosphate)lysine is present on Lys86.

The protein belongs to the TrpB family. Tetramer of two alpha and two beta chains. It depends on pyridoxal 5'-phosphate as a cofactor.

The enzyme catalyses (1S,2R)-1-C-(indol-3-yl)glycerol 3-phosphate + L-serine = D-glyceraldehyde 3-phosphate + L-tryptophan + H2O. The protein operates within amino-acid biosynthesis; L-tryptophan biosynthesis; L-tryptophan from chorismate: step 5/5. Its function is as follows. The beta subunit is responsible for the synthesis of L-tryptophan from indole and L-serine. The sequence is that of Tryptophan synthase beta chain (trpB) from Buchnera aphidicola subsp. Diuraphis noxia.